Reading from the N-terminus, the 289-residue chain is uncharacterized protein (289 aa).

An N-terminal signal peptide occupies residues 1-19; it reads MAKWLGAPLARGVSTATRA. 2 helical membrane-spanning segments follow: residues 90–110 and 257–277; these read GLLA…GWGV and AALS…LVFA.

It is found in the cell membrane. This is an uncharacterized protein from Mycobacterium tuberculosis (strain ATCC 25618 / H37Rv).